We begin with the raw amino-acid sequence, 213 residues long: Na(+)-translocating NADH-quinone reductase subunit D (213 aa).

The next 7 helical transmembrane spans lie at 21-41, 42-62, 77-97, 101-121, 131-151, 153-173, and 183-203; these read ILIAILGICSALAVTTTVQTA, ITMGIAVSIVTGCSSFFVSLL, IIISLFVIVIDQFLKAFFFDI, LSVFVGLIITNCIVMGRSESL, FLDGFASGLGYGWVLLVIGVI, ELFGFGTLMGFRIIPQFVYAS, and LSLMVLAPSAFFLLGIMIWLV.

The protein belongs to the NqrDE/RnfAE family. In terms of assembly, composed of six subunits; NqrA, NqrB, NqrC, NqrD, NqrE and NqrF.

Its subcellular location is the cell inner membrane. It carries out the reaction a ubiquinone + n Na(+)(in) + NADH + H(+) = a ubiquinol + n Na(+)(out) + NAD(+). In terms of biological role, NQR complex catalyzes the reduction of ubiquinone-1 to ubiquinol by two successive reactions, coupled with the transport of Na(+) ions from the cytoplasm to the periplasm. NqrA to NqrE are probably involved in the second step, the conversion of ubisemiquinone to ubiquinol. This Chlamydia pneumoniae (Chlamydophila pneumoniae) protein is Na(+)-translocating NADH-quinone reductase subunit D.